We begin with the raw amino-acid sequence, 85 residues long: Cloacin immunity protein (85 aa).

Position 12 is an N6-methyllysine (lysine 12).

Belongs to the cloacin immunity protein family.

In terms of biological role, this protein complexes with cloacin protein in equimolar amounts and inhibits it by binding with high affinity to the C-terminal catalytic domain of cloacin. In Escherichia coli, this protein is Cloacin immunity protein (cim).